The sequence spans 145 residues: uncharacterized protein (145 aa).

The N-terminal stretch at 1–29 (MHLIRAAGAVCLAVVLIAGCRFNEDQHQA) is a signal peptide. Residues 67–101 (KNGTQEKAEIQDKLSGVNQEGEEALDEMKMILSEL) adopt a coiled-coil conformation.

This is an uncharacterized protein from Bacillus subtilis (strain 168).